The following is a 170-amino-acid chain: Arginine repressor (170 aa).

Belongs to the ArgR family.

The protein resides in the cytoplasm. It participates in amino-acid biosynthesis; L-arginine biosynthesis [regulation]. Regulates arginine biosynthesis genes. This chain is Arginine repressor, found in Bifidobacterium longum (strain DJO10A).